Reading from the N-terminus, the 250-residue chain is Small ribosomal subunit protein uS3 (250 aa).

Residues 39 to 111 (IRTLIKNHYP…KVQINIFEVK (73 aa)) form the KH type-2 domain.

Belongs to the universal ribosomal protein uS3 family. In terms of assembly, part of the 30S ribosomal subunit. Forms a tight complex with proteins S10 and S14.

Functionally, binds the lower part of the 30S subunit head. Binds mRNA in the 70S ribosome, positioning it for translation. This is Small ribosomal subunit protein uS3 from Rubus stunt phytoplasma.